The following is a 194-amino-acid chain: Holliday junction branch migration complex subunit RuvA (194 aa).

The tract at residues 1-64 (MIGRLRGVLT…DDSAALYGFL (64 aa)) is domain I. The domain II stretch occupies residues 65–140 (SESERRLFRH…RAADFNNGIS (76 aa)). A flexible linker region spans residues 140-144 (STSGK). Residues 145 to 194 (LNLDTVSEAALALQQLGYKPAEAARMARDAGTESDDVASVIKKALQAALR) are domain III.

The protein belongs to the RuvA family. As to quaternary structure, homotetramer. Forms an RuvA(8)-RuvB(12)-Holliday junction (HJ) complex. HJ DNA is sandwiched between 2 RuvA tetramers; dsDNA enters through RuvA and exits via RuvB. An RuvB hexamer assembles on each DNA strand where it exits the tetramer. Each RuvB hexamer is contacted by two RuvA subunits (via domain III) on 2 adjacent RuvB subunits; this complex drives branch migration. In the full resolvosome a probable DNA-RuvA(4)-RuvB(12)-RuvC(2) complex forms which resolves the HJ.

The protein resides in the cytoplasm. Its function is as follows. The RuvA-RuvB-RuvC complex processes Holliday junction (HJ) DNA during genetic recombination and DNA repair, while the RuvA-RuvB complex plays an important role in the rescue of blocked DNA replication forks via replication fork reversal (RFR). RuvA specifically binds to HJ cruciform DNA, conferring on it an open structure. The RuvB hexamer acts as an ATP-dependent pump, pulling dsDNA into and through the RuvAB complex. HJ branch migration allows RuvC to scan DNA until it finds its consensus sequence, where it cleaves and resolves the cruciform DNA. The sequence is that of Holliday junction branch migration complex subunit RuvA from Xylella fastidiosa (strain 9a5c).